The primary structure comprises 824 residues: MASPALRHFLPRFGAAAAAASFLSLAGCQLGGGDPETVLPASGTFPLKGLAQNVSVRRNNMGMPLIESSTYHDALFTLGYVHAGDRIGQMLGMRLLAQGRLSEVAGADALEVDRLMRSVNLKRNASDLYNAASPRLKRFFDVYARGVNAYLFRYRDKLPADVARAGYTPEYWKPEDSALIFSLLNFSLSVNLQEELSALVLAQKVGADKLAWLLPTYPDEELPFAEADKLKGLNLSNQVTGLSDLNRIALQLSDLNMLGVAASSNWAIAPQRSRSGKSLLASDMQLPAGLNSAWSFVQIRAPKYQVSGASIAGLPLVLSGFNGKLAWSMSNVKGDNQDLFLEKIKREGNRVSYMADGKWVPAASHQETFLVKGGSPIRETVYETRHGALLNASATPPGNGLSLALQVPDFKDDKSLDAFFDLSRAPNVEKAFDTSREIRAITLNMVFADASNIGWQVTGRFPNRREGQGLLPSPGWDGKYDWDGFADSMLHPYDQDPRQGWLAAANQRTIPKGYGMQLSNSWGYPERAERIAELANSGKQDLRSTVAMQYDQTTTFAAKLKTIFQAPGMSKPLKQAIDALPEADRNNAREAFTRLMAFDGKLSATSADAALYELFLQESAKQIFLDELGPETSPAWQALVANASSSYSPQADHLLGRDDSPYWDDVKTPQKEDKPAILARSLAAAVTRGDSLLGSDHKAWQWGKLHRDNWTSANPLARQLGGGEFNRSASAAGGDHTTLNVSGFEWGKGFDARVAPSLRMIVDFSLVEPMTGMINTGQSGNPASPYYANSIEPWQKGQYMSIPLQQQNYEKGYGKQRLTLTPGK.

An N-terminal signal peptide occupies residues 1–26 (MASPALRHFLPRFGAAAAAASFLSLA). Serine 264 functions as the Nucleophile in the catalytic mechanism.

The protein belongs to the peptidase S45 family. Heterodimer of an alpha subunit and a beta subunit processed from the same precursor.

The protein localises to the periplasm. The catalysed reaction is an N-acyl-L-homoserine lactone + H2O = L-homoserine lactone + a carboxylate. In terms of biological role, catalyzes the deacylation of acyl-homoserine lactone (AHL or acyl-HSL), releasing homoserine lactone (HSL) and the corresponding fatty acid. Possesses a specificity for the degradation of long-chain acyl-HSLs (side chains of seven or more carbons in length). This is Acyl-homoserine lactone acylase QuiP (quiP) from Pseudomonas syringae pv. tomato (strain ATCC BAA-871 / DC3000).